A 309-amino-acid chain; its full sequence is Mas-related G-protein coupled receptor member E (309 aa).

Over Met1 to Thr21 the chain is Extracellular. Asn19 is a glycosylation site (N-linked (GlcNAc...) asparagine). Residues Ile22–Trp42 form a helical membrane-spanning segment. The Cytoplasmic segment spans residues Leu43–Asp59. The helical transmembrane segment at Val60 to Leu80 threads the bilayer. Topologically, residues Gln81–His91 are extracellular. Residues Ile92–Ile112 traverse the membrane as a helical segment. Residues Ser113–Arg132 lie on the Cytoplasmic side of the membrane. The chain crosses the membrane as a helical span at residues Tyr133–Leu153. Topologically, residues Ser154 to Leu168 are extracellular. Residues Cys169–Val189 form a helical membrane-spanning segment. The Cytoplasmic segment spans residues Thr190 to Thr212. Residues Leu213–Leu233 traverse the membrane as a helical segment. Residues Ser234–His247 lie on the Extracellular side of the membrane. An N-linked (GlcNAc...) asparagine glycan is attached at Asn236. The chain crosses the membrane as a helical span at residues Phe248 to Gly268. Residues Ser269–Val309 lie on the Cytoplasmic side of the membrane.

Belongs to the G-protein coupled receptor 1 family. Mas subfamily.

It localises to the cell membrane. Functionally, orphan receptor. May regulate nociceptor function and/or development, including the sensation or modulation of pain. The polypeptide is Mas-related G-protein coupled receptor member E (Mrgpre) (Rattus norvegicus (Rat)).